Consider the following 344-residue polypeptide: Phosphate acyltransferase (344 aa).

It belongs to the PlsX family. In terms of assembly, homodimer. Probably interacts with PlsY.

The protein localises to the cytoplasm. The catalysed reaction is a fatty acyl-[ACP] + phosphate = an acyl phosphate + holo-[ACP]. Its pathway is lipid metabolism; phospholipid metabolism. In terms of biological role, catalyzes the reversible formation of acyl-phosphate (acyl-PO(4)) from acyl-[acyl-carrier-protein] (acyl-ACP). This enzyme utilizes acyl-ACP as fatty acyl donor, but not acyl-CoA. This Paracidovorax citrulli (strain AAC00-1) (Acidovorax citrulli) protein is Phosphate acyltransferase.